Here is a 496-residue protein sequence, read N- to C-terminus: DNA-directed DNA/RNA polymerase mu (496 aa).

The tract at residues 1 to 22 is disordered; that stretch reads MLPKRRRVRAGSPHSAVASSTP. Phosphoserine is present on Ser12. Positions 12–22 are enriched in low complexity; it reads SPHSAVASSTP. The region spanning 23 to 122 is the BRCT domain; sequence PSVVRFPDVA…QPVPEEGRHH (100 aa). Thr241 and Val243 together coordinate Na(+). Positions 323 to 332 are involved in ssDNA binding; sequence RGKLQGHDVD. Mg(2+)-binding residues include Asp330, Asp332, and Asp420.

The protein belongs to the DNA polymerase type-X family. Mg(2+) serves as cofactor.

It is found in the nucleus. It catalyses the reaction DNA(n) + a 2'-deoxyribonucleoside 5'-triphosphate = DNA(n+1) + diphosphate. Functionally, gap-filling polymerase involved in repair of DNA double-strand breaks by non-homologous end joining (NHEJ). Participates in immunoglobulin (Ig) light chain gene rearrangement in V(D)J recombination. This chain is DNA-directed DNA/RNA polymerase mu (Polm), found in Mus musculus (Mouse).